The primary structure comprises 42 residues: uncharacterized protein (42 aa).

It is found in the cytoplasm. This is an uncharacterized protein from Escherichia coli (strain K12).